Consider the following 429-residue polypeptide: Methanol:N,N-dimethyl-4-nitrosoaniline oxidoreductase (429 aa).

Belongs to the iron-containing alcohol dehydrogenase family. Homodecamer. Mg(2+) serves as cofactor. The cofactor is Zn(2+). It depends on NADPH as a cofactor.

It carries out the reaction methanol + A = formaldehyde + AH2. Its activity is regulated as follows. Inhibited by azide and hydrazine. In terms of biological role, catalyzes the oxidation of methanol to yield formaldehyde. While the in vivo electron acceptor is not known, N,N-dimethyl-4-nitrosoaniline (NDMA) can serve this function in vitro and is reduced to 4-(hydroxylamino)-N,N-dimethylaniline. It can also use various other primary alcohols, polyols and formaldehyde. In addition, MNO is able to produce methylformate from methanol plus formaldehyde, and possesses a formaldehyde dismutase and a NADH-dependent formaldehyde reductase activity. The sequence is that of Methanol:N,N-dimethyl-4-nitrosoaniline oxidoreductase (mno) from Amycolatopsis methanolica.